Consider the following 269-residue polypeptide: NAD kinase (269 aa).

The active-site Proton acceptor is the Asp45. Residues 45–46, 122–123, Arg149, Asp151, and Ala186 contribute to the NAD(+) site; these read DG and NE.

This sequence belongs to the NAD kinase family. The cofactor is a divalent metal cation.

The protein localises to the cytoplasm. The enzyme catalyses NAD(+) + ATP = ADP + NADP(+) + H(+). Functionally, involved in the regulation of the intracellular balance of NAD and NADP, and is a key enzyme in the biosynthesis of NADP. Catalyzes specifically the phosphorylation on 2'-hydroxyl of the adenosine moiety of NAD to yield NADP. The protein is NAD kinase of Staphylococcus epidermidis (strain ATCC 35984 / DSM 28319 / BCRC 17069 / CCUG 31568 / BM 3577 / RP62A).